Consider the following 248-residue polypeptide: tRNA (guanine-N(1)-)-methyltransferase (248 aa).

Residues G113 and 133–138 contribute to the S-adenosyl-L-methionine site; that span reads LGDFVL.

The protein belongs to the RNA methyltransferase TrmD family. As to quaternary structure, homodimer.

The protein localises to the cytoplasm. It carries out the reaction guanosine(37) in tRNA + S-adenosyl-L-methionine = N(1)-methylguanosine(37) in tRNA + S-adenosyl-L-homocysteine + H(+). In terms of biological role, specifically methylates guanosine-37 in various tRNAs. This Albidiferax ferrireducens (strain ATCC BAA-621 / DSM 15236 / T118) (Rhodoferax ferrireducens) protein is tRNA (guanine-N(1)-)-methyltransferase.